Consider the following 122-residue polypeptide: Large ribosomal subunit protein uL29A (122 aa).

Positions 10-69 form a coiled coil; sequence QLGIKQIEERAAEIKADLAALRQKKNSGDVGANDIKTAKKNLARALTVRREKILEELVEA.

Belongs to the universal ribosomal protein uL29 family. As to quaternary structure, component of the large ribosomal subunit.

Its subcellular location is the cytoplasm. The sequence is that of Large ribosomal subunit protein uL29A (RPL35A) from Encephalitozoon cuniculi (strain GB-M1) (Microsporidian parasite).